We begin with the raw amino-acid sequence, 681 residues long: Cell cycle checkpoint protein RAD17 (681 aa).

An RAD1-binding motif motif is present at residues 17-25 (DWVDPSFDD). Residues 42 to 61 (VNNSSHRRKNGPSTLESSRF) form a disordered region. The residue at position 55 (Thr55) is a Phosphothreonine. Phosphoserine is present on residues Ser71 and Ser86. An ATP-binding site is contributed by 137-144 (GPPGCGKT). Disordered regions lie at residues 344–377 (SSKG…KPDR) and 606–681 (HGMI…SDGT). Ser359 is subject to Phosphoserine. An interaction with MCM7 region spans residues 432–681 (LVEPEEVVEM…IIEDYESDGT (250 aa)). The segment covering 631-662 (EPTQATVPETWSLPLSQNSASELPASQPQPFS) has biased composition (polar residues). Thr633 carries the post-translational modification Phosphothreonine; by ATM. Phosphoserine; by ATR and ATM occurs at positions 646 and 656. The span at 666–681 (DMEENIIIEDYESDGT) shows a compositional bias: acidic residues.

This sequence belongs to the rad17/RAD24 family. In terms of assembly, part of a DNA-binding complex containing RFC2, RFC3, RFC4 and RFC5. Interacts with RAD1 and RAD9 within the 9-1-1 (RAD1-RAD9-HUS1) complex. Interacts with RAD9B, POLE, SNU13 and MCM7. DNA damage promotes interaction with ATR or ATM and disrupts interaction with the 9-1-1 (RAD1-RAD9-HUS1) complex. Interacts (when phosphorylated) with NBN; promoting recruitment of the MRN complex to DNA damage sites. Phosphorylation on Ser-646 and Ser-656 is cell cycle-regulated, enhanced by genotoxic stress, and required for activation of checkpoint signaling. Phosphorylation is mediated by ATR upon UV or replication arrest, whereas it may be mediated both by ATR and ATM upon ionizing radiation. Phosphorylation on both sites is required for interaction with RAD1 but dispensable for interaction with RFC3 or RFC4. Phosphorylation at Thr-633 by ATM in response to DNA damage promotes interaction with NBN and recruitment of the MRN complex to DNA damage sites. As to expression, overexpressed in various cancer cell lines and in colon carcinoma (at protein level). Isoform 2 and isoform 3 are the most abundant isoforms in non irradiated cells (at protein level). Ubiquitous at low levels. Highly expressed in testis, where it is expressed within the germinal epithelium of the seminiferous tubuli. Weakly expressed in seminomas (testicular tumors).

It localises to the nucleus. It is found in the chromosome. Functionally, essential for sustained cell growth, maintenance of chromosomal stability, and ATR-dependent checkpoint activation upon DNA damage. Has a weak ATPase activity required for binding to chromatin. Participates in the recruitment of the 9-1-1 (RAD1-RAD9-HUS1) complex and RHNO1 onto chromatin, and in CHEK1 activation. Involved in homologous recombination by mediating recruitment of the MRN complex to DNA damage sites. May also serve as a sensor of DNA replication progression. This chain is Cell cycle checkpoint protein RAD17, found in Homo sapiens (Human).